The following is a 321-amino-acid chain: Fimbria adhesin protein (321 aa).

An N-terminal signal peptide occupies residues 1–18 (MKKLTLFIGLMALGTTSA).

The protein belongs to the fimbrial protein family.

It is found in the fimbrium. This is Fimbria adhesin protein (mrkD) from Klebsiella pneumoniae.